A 451-amino-acid polypeptide reads, in one-letter code: tRNA modification GTPase MnmE (451 aa).

The (6S)-5-formyl-5,6,7,8-tetrahydrofolate site is built by arginine 25, glutamate 82, and lysine 121. The 158-residue stretch at 217 to 374 (GMSVVILGRP…LKQHLKTEMG (158 aa)) folds into the TrmE-type G domain. Asparagine 227 contacts K(+). GTP is bound by residues 227–232 (NAGKSS), 246–252 (TDIAGTT), and 271–274 (DTAG). Position 231 (serine 231) interacts with Mg(2+). K(+)-binding residues include threonine 246, isoleucine 248, and threonine 251. Threonine 252 is a binding site for Mg(2+). Position 451 (lysine 451) interacts with (6S)-5-formyl-5,6,7,8-tetrahydrofolate.

It belongs to the TRAFAC class TrmE-Era-EngA-EngB-Septin-like GTPase superfamily. TrmE GTPase family. As to quaternary structure, homodimer. Heterotetramer of two MnmE and two MnmG subunits. K(+) serves as cofactor.

Its subcellular location is the cytoplasm. Exhibits a very high intrinsic GTPase hydrolysis rate. Involved in the addition of a carboxymethylaminomethyl (cmnm) group at the wobble position (U34) of certain tRNAs, forming tRNA-cmnm(5)s(2)U34. The sequence is that of tRNA modification GTPase MnmE from Hydrogenovibrio crunogenus (strain DSM 25203 / XCL-2) (Thiomicrospira crunogena).